The sequence spans 352 residues: Histidine biosynthesis bifunctional protein HisB (352 aa).

The histidinol-phosphatase stretch occupies residues 1–164 (MSQKILFIDR…EIENEILSSF (164 aa)). D9 acts as the Nucleophile in catalysis. D9 and D11 together coordinate Mg(2+). D11 acts as the Proton donor in catalysis. Zn(2+)-binding residues include C93, H95, C101, and C103. D130 contacts Mg(2+). The segment at 165 to 352 (RSASYQRTTK…ENLASSKGVI (188 aa)) is imidazoleglycerol-phosphate dehydratase.

The protein in the N-terminal section; belongs to the histidinol-phosphatase family. It in the C-terminal section; belongs to the imidazoleglycerol-phosphate dehydratase family. Requires Mg(2+) as cofactor. It depends on Zn(2+) as a cofactor.

Its subcellular location is the cytoplasm. It catalyses the reaction D-erythro-1-(imidazol-4-yl)glycerol 3-phosphate = 3-(imidazol-4-yl)-2-oxopropyl phosphate + H2O. It carries out the reaction L-histidinol phosphate + H2O = L-histidinol + phosphate. It participates in amino-acid biosynthesis; L-histidine biosynthesis; L-histidine from 5-phospho-alpha-D-ribose 1-diphosphate: step 6/9. It functions in the pathway amino-acid biosynthesis; L-histidine biosynthesis; L-histidine from 5-phospho-alpha-D-ribose 1-diphosphate: step 8/9. This is Histidine biosynthesis bifunctional protein HisB from Campylobacter jejuni subsp. jejuni serotype O:23/36 (strain 81-176).